A 180-amino-acid chain; its full sequence is Large ribosomal subunit protein bL17 (180 aa).

A disordered region spans residues 134–180 (AQAKAKKAAAMPTEESEAKPAEEGDVVGASEPDAKAPEEPPTEAPEN).

The protein belongs to the bacterial ribosomal protein bL17 family. As to quaternary structure, part of the 50S ribosomal subunit. Contacts protein L32.

This is Large ribosomal subunit protein bL17 from Mycobacterium tuberculosis (strain CDC 1551 / Oshkosh).